A 154-amino-acid polypeptide reads, in one-letter code: Large ribosomal subunit protein uL30 (154 aa).

Belongs to the universal ribosomal protein uL30 family. Part of the 50S ribosomal subunit.

The chain is Large ribosomal subunit protein uL30 from Methanococcus vannielii.